The primary structure comprises 276 residues: Polyamine aminopropyltransferase (276 aa).

The PABS domain maps to 3 to 236 (ELWYTEKQTK…GLWTFTIGSK (234 aa)). Residue Gln32 coordinates S-methyl-5'-thioadenosine. His63 and Asp87 together coordinate spermidine. S-methyl-5'-thioadenosine contacts are provided by residues Asp107 and 138–139 (DG). The active-site Proton acceptor is the Asp156. Residue 156–159 (DSTE) coordinates spermidine. S-methyl-5'-thioadenosine is bound at residue Pro163.

This sequence belongs to the spermidine/spermine synthase family. As to quaternary structure, homodimer or homotetramer.

Its subcellular location is the cytoplasm. The enzyme catalyses S-adenosyl 3-(methylsulfanyl)propylamine + putrescine = S-methyl-5'-thioadenosine + spermidine + H(+). It participates in amine and polyamine biosynthesis; spermidine biosynthesis; spermidine from putrescine: step 1/1. In terms of biological role, involved in the cell growth and proliferation. Catalyzes the irreversible transfer of a propylamine group from the amino donor S-adenosylmethioninamine (decarboxy-AdoMet) to putrescine (1,4-diaminobutane) to yield spermidine. This chain is Polyamine aminopropyltransferase, found in Bacillus subtilis (strain 168).